A 280-amino-acid chain; its full sequence is 4-hydroxy-3-methylbut-2-enyl diphosphate reductase (280 aa).

[4Fe-4S] cluster is bound at residue C12. (2E)-4-hydroxy-3-methylbut-2-enyl diphosphate contacts are provided by H40 and H72. 2 residues coordinate dimethylallyl diphosphate: H40 and H72. H40 and H72 together coordinate isopentenyl diphosphate. C94 serves as a coordination point for [4Fe-4S] cluster. Residue H122 participates in (2E)-4-hydroxy-3-methylbut-2-enyl diphosphate binding. H122 lines the dimethylallyl diphosphate pocket. H122 serves as a coordination point for isopentenyl diphosphate. E124 acts as the Proton donor in catalysis. T160 contributes to the (2E)-4-hydroxy-3-methylbut-2-enyl diphosphate binding site. [4Fe-4S] cluster is bound at residue C188. The (2E)-4-hydroxy-3-methylbut-2-enyl diphosphate site is built by S216, N218, and S260. The dimethylallyl diphosphate site is built by S216, N218, and S260. Residues S216, N218, and S260 each contribute to the isopentenyl diphosphate site.

The protein belongs to the IspH family. It depends on [4Fe-4S] cluster as a cofactor.

It catalyses the reaction isopentenyl diphosphate + 2 oxidized [2Fe-2S]-[ferredoxin] + H2O = (2E)-4-hydroxy-3-methylbut-2-enyl diphosphate + 2 reduced [2Fe-2S]-[ferredoxin] + 2 H(+). The catalysed reaction is dimethylallyl diphosphate + 2 oxidized [2Fe-2S]-[ferredoxin] + H2O = (2E)-4-hydroxy-3-methylbut-2-enyl diphosphate + 2 reduced [2Fe-2S]-[ferredoxin] + 2 H(+). It functions in the pathway isoprenoid biosynthesis; dimethylallyl diphosphate biosynthesis; dimethylallyl diphosphate from (2E)-4-hydroxy-3-methylbutenyl diphosphate: step 1/1. Its pathway is isoprenoid biosynthesis; isopentenyl diphosphate biosynthesis via DXP pathway; isopentenyl diphosphate from 1-deoxy-D-xylulose 5-phosphate: step 6/6. Catalyzes the conversion of 1-hydroxy-2-methyl-2-(E)-butenyl 4-diphosphate (HMBPP) into a mixture of isopentenyl diphosphate (IPP) and dimethylallyl diphosphate (DMAPP). Acts in the terminal step of the DOXP/MEP pathway for isoprenoid precursor biosynthesis. In Pelobacter propionicus (strain DSM 2379 / NBRC 103807 / OttBd1), this protein is 4-hydroxy-3-methylbut-2-enyl diphosphate reductase.